A 235-amino-acid chain; its full sequence is Purine nucleoside phosphorylase DeoD-type (235 aa).

His4 lines the a purine D-ribonucleoside pocket. Residues Gly20, Arg24, Arg43, and 87–90 each bind phosphate; that span reads RVGT. A purine D-ribonucleoside contacts are provided by residues 178-180 and 202-203; these read EME and SD. Asp203 serves as the catalytic Proton donor.

Belongs to the PNP/UDP phosphorylase family. Homohexamer; trimer of homodimers.

It carries out the reaction a purine D-ribonucleoside + phosphate = a purine nucleobase + alpha-D-ribose 1-phosphate. The catalysed reaction is a purine 2'-deoxy-D-ribonucleoside + phosphate = a purine nucleobase + 2-deoxy-alpha-D-ribose 1-phosphate. In terms of biological role, catalyzes the reversible phosphorolytic breakdown of the N-glycosidic bond in the beta-(deoxy)ribonucleoside molecules, with the formation of the corresponding free purine bases and pentose-1-phosphate. The polypeptide is Purine nucleoside phosphorylase DeoD-type (Geobacillus sp. (strain WCH70)).